A 69-amino-acid polypeptide reads, in one-letter code: MELESRMDDLECRQAFQDDTLQALNEVVVEQQRSIERLQLQVAALIKRLEDVQGLVGGVEEDEAPPPHY.

It belongs to the SlyX family.

In Pseudomonas paraeruginosa (strain DSM 24068 / PA7) (Pseudomonas aeruginosa (strain PA7)), this protein is Protein SlyX homolog.